The sequence spans 351 residues: Peptide chain release factor 1 (351 aa).

Gln229 bears the N5-methylglutamine mark.

Belongs to the prokaryotic/mitochondrial release factor family. Post-translationally, methylated by PrmC. Methylation increases the termination efficiency of RF1.

The protein localises to the cytoplasm. In terms of biological role, peptide chain release factor 1 directs the termination of translation in response to the peptide chain termination codons UAG and UAA. The sequence is that of Peptide chain release factor 1 from Cereibacter sphaeroides (strain KD131 / KCTC 12085) (Rhodobacter sphaeroides).